Consider the following 600-residue polypeptide: Glutamine--fructose-6-phosphate aminotransferase [isomerizing] (600 aa).

Cysteine 2 (nucleophile; for GATase activity) is an active-site residue. Residues 2 to 217 enclose the Glutamine amidotransferase type-2 domain; sequence CGIVGYIGTE…DEEIVIVTKD (216 aa). 2 consecutive SIS domains span residues 283–422 and 452–590; these read IRQA…AKGI and IARD…VDKP. Lysine 595 functions as the For Fru-6P isomerization activity in the catalytic mechanism.

As to quaternary structure, homodimer.

The protein localises to the cytoplasm. It catalyses the reaction D-fructose 6-phosphate + L-glutamine = D-glucosamine 6-phosphate + L-glutamate. Catalyzes the first step in hexosamine metabolism, converting fructose-6P into glucosamine-6P using glutamine as a nitrogen source. This Halalkalibacterium halodurans (strain ATCC BAA-125 / DSM 18197 / FERM 7344 / JCM 9153 / C-125) (Bacillus halodurans) protein is Glutamine--fructose-6-phosphate aminotransferase [isomerizing].